The sequence spans 628 residues: Beta-lactamase-like protein 1 (628 aa).

Positions 1–28 (MKNILSFSFSFSFLYILFLLLFLNNNLL) are cleaved as a signal peptide. Residues N45, N68, N198, and N241 are each glycosylated (N-linked (GlcNAc...) asparagine). The segment covering 245 to 281 (NNNNNNNNNNNNNNNNNNNNNNNNNNNNNNNNNNNNN) has biased composition (low complexity). The interval 245–285 (NNNNNNNNNNNNNNNNNNNNNNNNNNNNNNNNNNNNNKIKT) is disordered. Residues N313 and N335 are each glycosylated (N-linked (GlcNAc...) asparagine). The interval 494–516 (EKEEKEEEEENQQDESQQQQQQQ) is disordered. The segment covering 496-506 (EEKEEEEENQQ) has biased composition (acidic residues). The segment covering 507–516 (DESQQQQQQQ) has biased composition (low complexity).

The protein belongs to the beta-lactamase family.

The protein resides in the secreted. This is Beta-lactamase-like protein 1 from Dictyostelium discoideum (Social amoeba).